Here is a 419-residue protein sequence, read N- to C-terminus: Altered inheritance of mitochondria protein 6 (419 aa).

A signal peptide spans 1–31 (MLPPFIVAGLFSSYILIMGLMFSQISHVSNS).

Belongs to the AIM6 family.

In Kluyveromyces lactis (strain ATCC 8585 / CBS 2359 / DSM 70799 / NBRC 1267 / NRRL Y-1140 / WM37) (Yeast), this protein is Altered inheritance of mitochondria protein 6 (AIM6).